A 195-amino-acid polypeptide reads, in one-letter code: Imidazoleglycerol-phosphate dehydratase (195 aa).

The protein belongs to the imidazoleglycerol-phosphate dehydratase family.

It localises to the cytoplasm. The enzyme catalyses D-erythro-1-(imidazol-4-yl)glycerol 3-phosphate = 3-(imidazol-4-yl)-2-oxopropyl phosphate + H2O. It participates in amino-acid biosynthesis; L-histidine biosynthesis; L-histidine from 5-phospho-alpha-D-ribose 1-diphosphate: step 6/9. The protein is Imidazoleglycerol-phosphate dehydratase of Geobacillus kaustophilus (strain HTA426).